The sequence spans 396 residues: Probable isocitrate dehydrogenase [NAD] gamma 2, mitochondrial (396 aa).

A mitochondrion-targeting transit peptide spans 1 to 25 (MLAVTSCSMKTVLQYAVFLGHSREV). A citrate-binding site is contributed by Thr117. Substrate-binding residues include Arg133, Arg164, and Asp251. Asp251 provides a ligand contact to Mn(2+). Residue Asn321 participates in ADP binding.

This sequence belongs to the isocitrate and isopropylmalate dehydrogenases family. Heterooligomer of subunits alpha (IDH3A), beta (IDH3B), and gamma (IDH3G) in the apparent ratio of 2:1:1. The heterodimer containing one IDH3A and one IDH3B subunit and the heterodimer containing one IDH3A and one IDH3G subunit assemble into a heterotetramer (which contains two subunits of IDH3A, one of IDH3B and one of IDH3G) and further into the heterooctamer. Requires Mg(2+) as cofactor. Mn(2+) serves as cofactor.

Its subcellular location is the mitochondrion. Its activity is regulated as follows. The heterotetramer and the heterodimer composed of IDH3A and IDH3G subunits can be allosterically activated by citrate (CIT) or/and ADP, and the two activators can act independently or synergistically. The heterodimer composed of IDH3A and IDH3B subunits cannot be allosterically regulated and the allosteric regulation of the heterotetramer is through the IDH3G subunit and not the IDH3B subunit. The IDH3G subunit contains the allosteric site which consists of a CIT-binding site and an ADP-binding site, and the binding of CIT and ADP causes conformational changes at the allosteric site which are transmitted to the active site in the catalytic subunit (IDH3A) through a cascade of conformational changes at the heterodimer interface, leading to stabilization of the isocitrate-binding at the active site and thus activation of the enzyme. ATP can activate the heterotetramer and the heterodimer composed of IDH3A and IDH3G subunits at low concentrations but inhibits their activities at high concentrations, whereas ATP exhibits only inhibitory effect on the heterodimer composed of IDH3A and IDH3B subunits. Functionally, regulatory subunit which plays a role in the allosteric regulation of the enzyme catalyzing the decarboxylation of isocitrate (ICT) into alpha-ketoglutarate. The heterodimer composed of the alpha (IDH3A) and beta (IDH3B) subunits and the heterodimer composed of the alpha (IDH3A) and gamma (IDH3G) subunits, have considerable basal activity but the full activity of the heterotetramer (containing two subunits of IDH3A, one of IDH3B and one of IDH3G) requires the assembly and cooperative function of both heterodimers. This Mus musculus (Mouse) protein is Probable isocitrate dehydrogenase [NAD] gamma 2, mitochondrial.